Consider the following 71-residue polypeptide: Translation initiation factor IF-1 (71 aa).

Residues Met1–Lys71 enclose the S1-like domain.

It belongs to the IF-1 family. As to quaternary structure, component of the 30S ribosomal translation pre-initiation complex which assembles on the 30S ribosome in the order IF-2 and IF-3, IF-1 and N-formylmethionyl-tRNA(fMet); mRNA recruitment can occur at any time during PIC assembly.

It is found in the cytoplasm. One of the essential components for the initiation of protein synthesis. Stabilizes the binding of IF-2 and IF-3 on the 30S subunit to which N-formylmethionyl-tRNA(fMet) subsequently binds. Helps modulate mRNA selection, yielding the 30S pre-initiation complex (PIC). Upon addition of the 50S ribosomal subunit IF-1, IF-2 and IF-3 are released leaving the mature 70S translation initiation complex. The sequence is that of Translation initiation factor IF-1 from Mycoplasmopsis synoviae (strain 53) (Mycoplasma synoviae).